The sequence spans 168 residues: S-ribosylhomocysteine lyase (168 aa).

Fe cation-binding residues include histidine 54, histidine 58, and cysteine 128.

This sequence belongs to the LuxS family. As to quaternary structure, homodimer. Requires Fe cation as cofactor.

It carries out the reaction S-(5-deoxy-D-ribos-5-yl)-L-homocysteine = (S)-4,5-dihydroxypentane-2,3-dione + L-homocysteine. Its function is as follows. Involved in the synthesis of autoinducer 2 (AI-2) which is secreted by bacteria and is used to communicate both the cell density and the metabolic potential of the environment. The regulation of gene expression in response to changes in cell density is called quorum sensing. Catalyzes the transformation of S-ribosylhomocysteine (RHC) to homocysteine (HC) and 4,5-dihydroxy-2,3-pentadione (DPD). This is S-ribosylhomocysteine lyase from Histophilus somni (strain 129Pt) (Haemophilus somnus).